The primary structure comprises 127 residues: Fluoride-specific ion channel FluC (127 aa).

The next 3 membrane-spanning stretches (helical) occupy residues 28–48 (LALF…SLAM), 73–93 (TGVL…ALLI), and 98–118 (VGLA…GLFL). Positions 77 and 80 each coordinate Na(+).

It belongs to the fluoride channel Fluc/FEX (TC 1.A.43) family.

It localises to the cell inner membrane. It catalyses the reaction fluoride(in) = fluoride(out). With respect to regulation, na(+) is not transported, but it plays an essential structural role and its presence is essential for fluoride channel function. Its function is as follows. Fluoride-specific ion channel. Important for reducing fluoride concentration in the cell, thus reducing its toxicity. This chain is Fluoride-specific ion channel FluC, found in Beijerinckia indica subsp. indica (strain ATCC 9039 / DSM 1715 / NCIMB 8712).